The following is a 312-amino-acid chain: MEIMFYHPTFDTAWWLNALAKAIPGANIREWKPGDNEPADYALVWHPPVEMLEGRKLKAVFALGAGVDSILSKLKAHPEMLDASIPLFRLEDTGMGLQMQEYAVSQVLHWFRRFDDYQALKNQSTWQPLPEYDRDEFTVGIMGAGVLGAKVAEALQAWGFPLRCWSRSRKSWPGVESFAGAEELGAFLNQTRVLINLLPNTAETVGIINSGLLNQLRDGAYLLNLARGVHVNEDDLLAALNSEKLKGAMLDVFSREPLPKESPLWQHPRVAMTPHIAAVTRPAEAVDYISRTITHLERGESVTGQVDRVRGY.

Residue Arg227 is part of the active site. The Proton donor role is filled by His275.

The protein belongs to the D-isomer specific 2-hydroxyacid dehydrogenase family. GhrA subfamily.

It is found in the cytoplasm. The enzyme catalyses glycolate + NADP(+) = glyoxylate + NADPH + H(+). The catalysed reaction is (R)-glycerate + NAD(+) = 3-hydroxypyruvate + NADH + H(+). It catalyses the reaction (R)-glycerate + NADP(+) = 3-hydroxypyruvate + NADPH + H(+). Its function is as follows. Catalyzes the NADPH-dependent reduction of glyoxylate and hydroxypyruvate into glycolate and glycerate, respectively. This is Glyoxylate/hydroxypyruvate reductase A from Citrobacter koseri (strain ATCC BAA-895 / CDC 4225-83 / SGSC4696).